The chain runs to 212 residues: Ribosomal RNA small subunit methyltransferase G (212 aa).

Residues G80, L85, 131–132 (AE), and R146 each bind S-adenosyl-L-methionine.

Belongs to the methyltransferase superfamily. RNA methyltransferase RsmG family.

It is found in the cytoplasm. It carries out the reaction guanosine(527) in 16S rRNA + S-adenosyl-L-methionine = N(7)-methylguanosine(527) in 16S rRNA + S-adenosyl-L-homocysteine. In terms of biological role, specifically methylates the N7 position of guanine in position 527 of 16S rRNA. This Xanthomonas campestris pv. campestris (strain B100) protein is Ribosomal RNA small subunit methyltransferase G.